The chain runs to 478 residues: RNA-binding protein 42 (478 aa).

Residues 1 to 20 (MASAMAGAGPAPGLPVAGGP) show a composition bias toward low complexity. The interval 1 to 33 (MASAMAGAGPAPGLPVAGGPVVPGPGVGIPGKS) is disordered. At Ala-2 the chain carries N-acetylalanine. Ser-133 carries the post-translational modification Phosphoserine. An asymmetric dimethylarginine mark is found at Arg-151, Arg-156, Arg-166, and Arg-179. Disordered regions lie at residues 171-207 (LSSA…MLPP) and 317-354 (SLRP…PEKL). Residues 193–205 (PPLPGPPGPPMML) are compositionally biased toward pro residues. Residues 234-478 (ELGLGLGLGL…QKEKKKLGLR (245 aa)) are necessary for interaction with HNRNPK. A compositionally biased stretch (basic and acidic residues) spans 343–354 (GEDKKKGKPEKL). Residues 379-457 (FRIFCGDLGN…RPIKLRKSMW (79 aa)) form the RRM domain.

Belongs to the RRM RBM42 family. Interacts with HNRNPK. In terms of tissue distribution, expressed in cell lines (at protein level). Expressed in heart, brain, spleen, lung, liver, skeletal muscle, kidney and testis.

The protein localises to the nucleus. It is found in the cytoplasm. Its function is as follows. Binds (via the RRM domain) to the 3'-untranslated region (UTR) of CDKN1A mRNA. This is RNA-binding protein 42 (Rbm42) from Mus musculus (Mouse).